A 240-amino-acid chain; its full sequence is Putative exosome complex component RRP41 (240 aa).

It belongs to the RNase PH family. As to quaternary structure, component of the RNA exosome complex.

It localises to the cytoplasm. Its subcellular location is the nucleus. The protein localises to the nucleolus. The protein resides in the nucleoplasm. In terms of biological role, non-catalytic component of the RNA exosome complex which has 3'-&gt;5' exoribonuclease activity and participates in a multitude of cellular RNA processing and degradation events. In Caenorhabditis briggsae, this protein is Putative exosome complex component RRP41 (exos-4.1).